The sequence spans 189 residues: Pyridoxal 5'-phosphate synthase subunit PdxT (189 aa).

47-49 (GES) contacts L-glutamine. C79 functions as the Nucleophile in the catalytic mechanism. L-glutamine is bound by residues R106 and 135–136 (IR). Residues H171 and E173 each act as charge relay system in the active site.

It belongs to the glutaminase PdxT/SNO family. In terms of assembly, in the presence of PdxS, forms a dodecamer of heterodimers. Only shows activity in the heterodimer.

The catalysed reaction is aldehydo-D-ribose 5-phosphate + D-glyceraldehyde 3-phosphate + L-glutamine = pyridoxal 5'-phosphate + L-glutamate + phosphate + 3 H2O + H(+). The enzyme catalyses L-glutamine + H2O = L-glutamate + NH4(+). Its pathway is cofactor biosynthesis; pyridoxal 5'-phosphate biosynthesis. Catalyzes the hydrolysis of glutamine to glutamate and ammonia as part of the biosynthesis of pyridoxal 5'-phosphate. The resulting ammonia molecule is channeled to the active site of PdxS. This chain is Pyridoxal 5'-phosphate synthase subunit PdxT, found in Desulforudis audaxviator (strain MP104C).